The sequence spans 328 residues: Glutathionyl-hydroquinone reductase YqjG (328 aa).

Cysteine 63 acts as the Nucleophile in catalysis. Residues tryptophan 96, 130-133, and 148-149 each bind glutathione; these read RVTV and ES. Residues 172-296 form the GST C-terminal domain; it reads PPALQTKIDE…VNFDHIRNHY (125 aa). Tyrosine 195 functions as the Proton donor/acceptor in the catalytic mechanism. A dimerization region spans residues 203–311; that stretch reads QEAYDEAVAK…TINPTGIISI (109 aa).

The protein belongs to the GST superfamily. Xi-class GSH transferase family. In terms of assembly, homodimer.

It catalyses the reaction 2-(glutathione-S-yl)-hydroquinone + glutathione = hydroquinone + glutathione disulfide. Functionally, catalyzes glutathione (GSH)-dependent reduction of glutathionyl-hydroquinones (GS-HQs) to the corresponding hydroquinones. Can use a variety of GS-HQs as substrates, such as GS-p-hydroquinone (GS-HQ), GS-hydroxy-p-hydroquinone (GS-HHQ), GS-methyl-p-hydroquinone (GS-MHQ), GS-menadiol, and GS-trichloro-p-hydroquinone (GS-TriCH). Also displays GSH-dependent disulfide-bond reduction activity toward HED (2-hydroxyethyl disulfide), and is able to catalyze DMA (dimethylarsinate) reduction. Exhibits no GSH transferase activity with 1-chloro-2,4-dinitrobenzene (CDNB). The sequence is that of Glutathionyl-hydroquinone reductase YqjG (yqjG) from Escherichia coli (strain K12).